A 309-amino-acid chain; its full sequence is 5-oxoprolinase subunit C (309 aa).

It belongs to the PxpC family. Forms a complex composed of PxpA, PxpB and PxpC.

It catalyses the reaction 5-oxo-L-proline + ATP + 2 H2O = L-glutamate + ADP + phosphate + H(+). Functionally, catalyzes the cleavage of 5-oxoproline to form L-glutamate coupled to the hydrolysis of ATP to ADP and inorganic phosphate. In Haemophilus influenzae (strain ATCC 51907 / DSM 11121 / KW20 / Rd), this protein is 5-oxoprolinase subunit C.